Here is a 411-residue protein sequence, read N- to C-terminus: Serine/threonine transporter SstT (411 aa).

8 helical membrane passes run 17-37 (IMVGLVAGIIVALVSPATASA), 41-61 (LGALFVGALKAVAPVLVLVLV), 79-99 (ILFLYLLGTFAAALVAVVVSF), 138-158 (ALISANYIGILAWAVGLGLAL), 189-209 (LGIFGLVASTLAETGFGALWG), 214-234 (LVVLIGCMLLVALVLNPLIVF), 295-315 (MAGAAITITVLTLAAVHTLGI), and 327-347 (VVAAVCACGASGVAGGSLLLI).

This sequence belongs to the dicarboxylate/amino acid:cation symporter (DAACS) (TC 2.A.23) family.

It is found in the cell inner membrane. It catalyses the reaction L-serine(in) + Na(+)(in) = L-serine(out) + Na(+)(out). It carries out the reaction L-threonine(in) + Na(+)(in) = L-threonine(out) + Na(+)(out). In terms of biological role, involved in the import of serine and threonine into the cell, with the concomitant import of sodium (symport system). The sequence is that of Serine/threonine transporter SstT from Serratia proteamaculans (strain 568).